A 348-amino-acid polypeptide reads, in one-letter code: Calcium homeostasis modulator protein 1 (348 aa).

The Cytoplasmic segment spans residues 1–20; sequence MDKFRMIFQFLQSNQESFMN. The tract at residues 9 to 36 is central pore; it reads QFLQSNQESFMNGICGIMALASAQMYSA. A helical transmembrane segment spans residues 21-36; that stretch reads GICGIMALASAQMYSA. The Extracellular portion of the chain corresponds to 37 to 48; it reads FDFNCPCLPGYN. Cystine bridges form between C41–C126 and C43–C160. The helical transmembrane segment at 49–71 threads the bilayer; the sequence is VVYSLGILLTPPLVLFLLGLVMN. The phospholipid-binding stretch occupies residues 62 to 69; that stretch reads VLFLLGLV. Topologically, residues 72–98 are cytoplasmic; it reads NNISMLAEEWKRPAGRRAKDPAVLRYM. Residues 99-124 form a helical membrane-spanning segment; sequence FCSMAQRALIAPVVWVAVTLLDGKCF. A lipid anchor (S-palmitoyl cysteine) is attached at C100. Positions 104–116 are phospholipid-binding; it reads QRALIAPVVWVAV. Over 125 to 179 the chain is Extracellular; the sequence is LCAFCTAVPVATLGNGSLVPGLPAPELARLLARVPCPEIYDGNWLLAREVAVRYL. A glycan (N-linked (GlcNAc...) asparagine) is linked at N139. Residues 180-205 form a helical membrane-spanning segment; the sequence is RCISQALGWSFVLLTTLLAFVVRSVR. Positions 191–201 are phospholipid-binding; the sequence is VLLTTLLAFVV. Residues 206 to 348 lie on the Cytoplasmic side of the membrane; that stretch reads PCFTQVAFLK…KEVATYFSKV (143 aa). C207 carries S-palmitoyl cysteine lipidation. The interval 324–348 is disordered; that stretch reads LMSNGWAGGEPRPPRKEVATYFSKV.

This sequence belongs to the CALHM family. Oligomerizes to form hexamers and octamers. Does not form gap junctions. Associates with CALHM3 as a pore-forming subunit in a hetero-hexameric channel complex. Post-translationally, N-glycosylated. Assembly with CALHM3 is associated with N-glycan remodeling and formation of hybrid complex- and high mannose-type glycochains. This N-glycan processing regulates channel trafficking and gating kinetics. Palmitoylated by ZDHHC3, ZDHHC20 and possibly ZDHHC7. Palmitoylation regulates voltage-dependent gating of the channel by shifting it toward more depolarized potentials. Specifically expressed in type II taste bud cells (at protein level). Not expressed in brain.

The protein localises to the cell membrane. Its subcellular location is the endoplasmic reticulum membrane. It localises to the basolateral cell membrane. It carries out the reaction ATP(in) = ATP(out). The enzyme catalyses Ca(2+)(in) = Ca(2+)(out). The catalysed reaction is Mg(2+)(in) = Mg(2+)(out). It catalyses the reaction Na(+)(in) = Na(+)(out). It carries out the reaction K(+)(in) = K(+)(out). The enzyme catalyses Li(+)(in) = Li(+)(out). The catalysed reaction is Rb(+)(in) = Rb(+)(out). It catalyses the reaction Cs(+)(in) = Cs(+)(out). It carries out the reaction chloride(in) = chloride(out). Regulated by membrane voltage and extracellular Ca(2+). Inhibited by Gd(3+), ruthenium red, and Zn(2+) and partially inhibited by 2-aminoethoxydiphenyl borate. Its function is as follows. Pore-forming subunit of gustatory voltage-gated ion channels required for sensory perception of sweet, bitter and umami tastes. With CALHM3 forms a fast-activating voltage-gated ATP-release channel in type II taste bud cells, ATP acting as a neurotransmitter to activate afferent neural gustatory pathways. Acts both as a voltage-gated and calcium-activated ion channel: mediates neuronal excitability in response to membrane depolarization and low extracellular Ca(2+) concentration. Has poor ion selectivity and forms a wide pore (around 14 Angstroms) that mediates permeation of small ions including Ca(2+), Na(+), K(+) and Cl(-), as well as larger ions such as ATP(4-). Mediates Ca(2+) influx and downstream activation of the ERK1 and ERK2 cascade in neurons. Triggers endoplasmic reticulum stress by reducing the calcium content of the endoplasmic reticulum. May indirectly control amyloid precursor protein (APP) proteolysis and aggregated amyloid-beta (Abeta) peptides levels in a Ca(2+) dependent manner. This is Calcium homeostasis modulator protein 1 from Mus musculus (Mouse).